Consider the following 119-residue polypeptide: Protein phosphatase EYA3 (119 aa).

It belongs to the HAD-like hydrolase superfamily. EYA family. Mg(2+) serves as cofactor.

The protein localises to the cytoplasm. Its subcellular location is the nucleus. It catalyses the reaction O-phospho-L-tyrosyl-[protein] + H2O = L-tyrosyl-[protein] + phosphate. In terms of biological role, tyrosine phosphatase that specifically dephosphorylates 'Tyr-142' of histone H2AX (H2AXY142ph). 'Tyr-142' phosphorylation of histone H2AX plays a central role in DNA repair and acts as a mark that distinguishes between apoptotic and repair responses to genotoxic stress. Promotes efficient DNA repair by dephosphorylating H2AX, promoting the recruitment of DNA repair complexes containing MDC1. Its function as histone phosphatase probably explains its role in transcription regulation during organogenesis. May be involved in development of the eye. This Gallus gallus (Chicken) protein is Protein phosphatase EYA3 (EYA3).